Here is a 238-residue protein sequence, read N- to C-terminus: Uridylate kinase (238 aa).

Lys-12 to Gly-15 serves as a coordination point for ATP. Residue Gly-54 participates in UMP binding. Gly-55 and Arg-59 together coordinate ATP. UMP contacts are provided by residues Asp-74 and Thr-135–Thr-142. The ATP site is built by Thr-162, Tyr-168, and Asp-171.

The protein belongs to the UMP kinase family. As to quaternary structure, homohexamer.

Its subcellular location is the cytoplasm. The catalysed reaction is UMP + ATP = UDP + ADP. Its pathway is pyrimidine metabolism; CTP biosynthesis via de novo pathway; UDP from UMP (UMPK route): step 1/1. Its activity is regulated as follows. Inhibited by UTP. Catalyzes the reversible phosphorylation of UMP to UDP. The sequence is that of Uridylate kinase from Nitratidesulfovibrio vulgaris (strain ATCC 29579 / DSM 644 / CCUG 34227 / NCIMB 8303 / VKM B-1760 / Hildenborough) (Desulfovibrio vulgaris).